Consider the following 560-residue polypeptide: DNA ligase B (560 aa).

Residue Lys-124 is the N6-AMP-lysine intermediate of the active site.

It belongs to the NAD-dependent DNA ligase family. LigB subfamily.

It catalyses the reaction NAD(+) + (deoxyribonucleotide)n-3'-hydroxyl + 5'-phospho-(deoxyribonucleotide)m = (deoxyribonucleotide)n+m + AMP + beta-nicotinamide D-nucleotide.. In terms of biological role, catalyzes the formation of phosphodiester linkages between 5'-phosphoryl and 3'-hydroxyl groups in double-stranded DNA using NAD as a coenzyme and as the energy source for the reaction. The protein is DNA ligase B of Escherichia coli O1:K1 / APEC.